Reading from the N-terminus, the 264-residue chain is Hydroxyethylthiazole kinase (264 aa).

Substrate is bound at residue Met47. Residues Arg123 and Ser169 each contribute to the ATP site. Gly196 contributes to the substrate binding site.

Belongs to the Thz kinase family. Mg(2+) serves as cofactor.

The catalysed reaction is 5-(2-hydroxyethyl)-4-methylthiazole + ATP = 4-methyl-5-(2-phosphooxyethyl)-thiazole + ADP + H(+). It functions in the pathway cofactor biosynthesis; thiamine diphosphate biosynthesis; 4-methyl-5-(2-phosphoethyl)-thiazole from 5-(2-hydroxyethyl)-4-methylthiazole: step 1/1. Its function is as follows. Catalyzes the phosphorylation of the hydroxyl group of 4-methyl-5-beta-hydroxyethylthiazole (THZ). The polypeptide is Hydroxyethylthiazole kinase (Brachyspira hyodysenteriae (strain ATCC 49526 / WA1)).